Here is a 750-residue protein sequence, read N- to C-terminus: Probable methylmalonyl-CoA mutase large subunit (750 aa).

Residues Tyr-91, Met-94, Thr-101, Arg-103, Tyr-105, and Ser-130 each contribute to the (R)-methylmalonyl-CoA site. Phe-133 and Ala-155 together coordinate cob(II)alamin. Residues Thr-211 and Gln-213 each coordinate (R)-methylmalonyl-CoA. Residues Val-222 and Arg-223 each coordinate cob(II)alamin. The (R)-methylmalonyl-CoA site is built by Arg-223, His-260, Arg-299, and Ser-301. Cob(II)alamin is bound by residues Gly-349, Glu-386, Ala-389, Gly-628, His-629, Asp-630, Arg-631, Ser-674, Leu-676, Gly-705, and Thr-728. One can recognise a B12-binding domain in the interval 616-748; the sequence is RPRILIAKMG…HRLAERLGYT (133 aa).

It belongs to the methylmalonyl-CoA mutase family. In terms of assembly, heterodimer of an alpha and a beta chain. Adenosylcob(III)alamin serves as cofactor.

It catalyses the reaction (R)-methylmalonyl-CoA = succinyl-CoA. It functions in the pathway metabolic intermediate metabolism; propanoyl-CoA degradation; succinyl-CoA from propanoyl-CoA: step 3/3. In terms of biological role, catalyzes the isomerization of succinyl-CoA to methylmalonyl-CoA during synthesis of propionate from tricarboxylic acid-cycle intermediates. The chain is Probable methylmalonyl-CoA mutase large subunit (mutB) from Mycobacterium bovis (strain ATCC BAA-935 / AF2122/97).